The primary structure comprises 132 residues: MGSTSSTPKSTICTFSTTAPVTSSTPYFFNPKKEHIILAFFAGVLLTLLIVALIFLIVKSCRKCHSSAQTQDPPSEPPTKLSSLSKESLTYASMTFKPPEENSNDLTRNHSSGLEPTIYSQIKVTDSDLPLP.

Residues 36-56 traverse the membrane as a helical segment; that stretch reads IILAFFAGVLLTLLIVALIFL. Positions 95-132 are disordered; the sequence is TFKPPEENSNDLTRNHSSGLEPTIYSQIKVTDSDLPLP. A compositionally biased stretch (polar residues) spans 104 to 124; sequence NDLTRNHSSGLEPTIYSQIKV. At serine 111 the chain carries Phosphoserine.

It localises to the membrane. This Mus musculus (Mouse) protein is Transmembrane protein C1orf162 homolog.